The chain runs to 161 residues: NADH-quinone oxidoreductase subunit I (161 aa).

2 4Fe-4S ferredoxin-type domains span residues 53–82 (RRYPSGEERCIACKLCEAICPAQAITIEAE) and 92–121 (TRYDIDMVKCIYCGFCQEACPVDAIVEGPN). The [4Fe-4S] cluster site is built by C62, C65, C68, C72, C101, C104, C107, and C111.

Belongs to the complex I 23 kDa subunit family. As to quaternary structure, NDH-1 is composed of 14 different subunits. Subunits NuoA, H, J, K, L, M, N constitute the membrane sector of the complex. [4Fe-4S] cluster is required as a cofactor.

It localises to the cell inner membrane. It carries out the reaction a quinone + NADH + 5 H(+)(in) = a quinol + NAD(+) + 4 H(+)(out). In terms of biological role, NDH-1 shuttles electrons from NADH, via FMN and iron-sulfur (Fe-S) centers, to quinones in the respiratory chain. The immediate electron acceptor for the enzyme in this species is believed to be ubiquinone. Couples the redox reaction to proton translocation (for every two electrons transferred, four hydrogen ions are translocated across the cytoplasmic membrane), and thus conserves the redox energy in a proton gradient. The chain is NADH-quinone oxidoreductase subunit I from Hyphomonas neptunium (strain ATCC 15444).